Consider the following 307-residue polypeptide: Stage III sporulation protein AA (307 aa).

Residue 143-150 coordinates ATP; it reads GPPQTGKT.

This is Stage III sporulation protein AA (spoIIIAA) from Bacillus subtilis (strain 168).